The following is a 68-amino-acid chain: Defensin gallicin (68 aa).

A signal peptide spans 1 to 16 (MWIESDAGVAIDRHAR).

In terms of processing, contains 5 disulfide bonds. As to expression, expressed in hemolymph, gills, digestive gland, foot, adductor muscles and mantle.

The protein localises to the secreted. Its subcellular location is the target cell membrane. Its function is as follows. Shows antibacterial activity against numerous Gram-positive bacteria. It selectively inhibits peptidoglycan biosynthesis through complex formation with the cell wall precursor lipid II (1:1 molar ratio) thus inhibiting cell wall synthesis. This is Defensin gallicin from Mytilus galloprovincialis (Mediterranean mussel).